Consider the following 194-residue polypeptide: CASP-like protein 2C2 (194 aa).

Residues 1 to 27 (MAAGQPRPPPPPSSVRTERVLRAACAA) lie on the Cytoplasmic side of the membrane. A helical transmembrane segment spans residues 28–48 (MAAAGALLLGFSAETKTVIFV). The Extracellular portion of the chain corresponds to 49–58 (QKKAVPKDVQ). The helical transmembrane segment at 59-79 (ALWVLIVAAAAAAAYHAAQLA) threads the bilayer. The Cytoplasmic segment spans residues 80–113 (RCLCMDRLAGGGGGCRRLRRAVACATFLLDKGCA). Residues 114-134 (YMVLATTVAALQACFVGLLGV) traverse the membrane as a helical segment. Topologically, residues 135 to 152 (EALQWSKLCNIYTRFCEQ) are extracellular. Residues 153–173 (AAAGMVCSLVAAAGMAVLSAF) traverse the membrane as a helical segment. Over 174–194 (SARDLFRRRRPCSPCVQVQQV) the chain is Cytoplasmic.

The protein belongs to the Casparian strip membrane proteins (CASP) family. As to quaternary structure, homodimer and heterodimers.

It is found in the cell membrane. The protein is CASP-like protein 2C2 of Sorghum bicolor (Sorghum).